A 178-amino-acid polypeptide reads, in one-letter code: RNA pyrophosphohydrolase (178 aa).

The Nudix hydrolase domain occupies 18–171; the sequence is PYRPCVGLMV…KRKVYEQVVA (154 aa). The Nudix box motif lies at 59-80; it reads GGIDKGEDPAQAALRELYEETG.

This sequence belongs to the Nudix hydrolase family. RppH subfamily. A divalent metal cation is required as a cofactor.

In terms of biological role, accelerates the degradation of transcripts by removing pyrophosphate from the 5'-end of triphosphorylated RNA, leading to a more labile monophosphorylated state that can stimulate subsequent ribonuclease cleavage. This chain is RNA pyrophosphohydrolase, found in Brucella canis (strain ATCC 23365 / NCTC 10854 / RM-666).